The chain runs to 156 residues: Small ribosomal subunit protein uS7 (156 aa).

The protein belongs to the universal ribosomal protein uS7 family. Part of the 30S ribosomal subunit. Contacts proteins S9 and S11.

Its function is as follows. One of the primary rRNA binding proteins, it binds directly to 16S rRNA where it nucleates assembly of the head domain of the 30S subunit. Is located at the subunit interface close to the decoding center, probably blocks exit of the E-site tRNA. This is Small ribosomal subunit protein uS7 from Idiomarina loihiensis (strain ATCC BAA-735 / DSM 15497 / L2-TR).